We begin with the raw amino-acid sequence, 188 residues long: Adenine phosphoribosyltransferase (188 aa).

It belongs to the purine/pyrimidine phosphoribosyltransferase family. As to quaternary structure, homodimer.

The protein resides in the cytoplasm. The enzyme catalyses AMP + diphosphate = 5-phospho-alpha-D-ribose 1-diphosphate + adenine. It participates in purine metabolism; AMP biosynthesis via salvage pathway; AMP from adenine: step 1/1. Functionally, catalyzes a salvage reaction resulting in the formation of AMP, that is energically less costly than de novo synthesis. The chain is Adenine phosphoribosyltransferase from Salinispora arenicola (strain CNS-205).